The primary structure comprises 227 residues: Phosphoribosylformylglycinamidine synthase subunit PurQ (227 aa).

One can recognise a Glutamine amidotransferase type-1 domain in the interval 3-227; sequence FAVIVFPGSN…NWRESHVTAS (225 aa). C86 serves as the catalytic Nucleophile. Catalysis depends on residues H194 and E196.

As to quaternary structure, part of the FGAM synthase complex composed of 1 PurL, 1 PurQ and 2 PurS subunits.

It localises to the cytoplasm. It carries out the reaction N(2)-formyl-N(1)-(5-phospho-beta-D-ribosyl)glycinamide + L-glutamine + ATP + H2O = 2-formamido-N(1)-(5-O-phospho-beta-D-ribosyl)acetamidine + L-glutamate + ADP + phosphate + H(+). It catalyses the reaction L-glutamine + H2O = L-glutamate + NH4(+). The protein operates within purine metabolism; IMP biosynthesis via de novo pathway; 5-amino-1-(5-phospho-D-ribosyl)imidazole from N(2)-formyl-N(1)-(5-phospho-D-ribosyl)glycinamide: step 1/2. Its function is as follows. Part of the phosphoribosylformylglycinamidine synthase complex involved in the purines biosynthetic pathway. Catalyzes the ATP-dependent conversion of formylglycinamide ribonucleotide (FGAR) and glutamine to yield formylglycinamidine ribonucleotide (FGAM) and glutamate. The FGAM synthase complex is composed of three subunits. PurQ produces an ammonia molecule by converting glutamine to glutamate. PurL transfers the ammonia molecule to FGAR to form FGAM in an ATP-dependent manner. PurS interacts with PurQ and PurL and is thought to assist in the transfer of the ammonia molecule from PurQ to PurL. This chain is Phosphoribosylformylglycinamidine synthase subunit PurQ, found in Shouchella clausii (strain KSM-K16) (Alkalihalobacillus clausii).